A 220-amino-acid polypeptide reads, in one-letter code: Dual specificity protein phosphatase 19 (220 aa).

Met-1 carries the post-translational modification N-acetylmethionine. One can recognise a Tyrosine-protein phosphatase domain in the interval 64-205 (QVGVIKPWLL…LRTYQVGKES (142 aa)). Cys-149 serves as the catalytic Phosphocysteine intermediate.

It belongs to the protein-tyrosine phosphatase family. Non-receptor class dual specificity subfamily.

It carries out the reaction O-phospho-L-tyrosyl-[protein] + H2O = L-tyrosyl-[protein] + phosphate. It catalyses the reaction O-phospho-L-seryl-[protein] + H2O = L-seryl-[protein] + phosphate. The enzyme catalyses O-phospho-L-threonyl-[protein] + H2O = L-threonyl-[protein] + phosphate. Its activity is regulated as follows. Phosphatase activity is enhanced by Ca(2+) and Mn(2+). Functionally, has a dual specificity toward Ser/Thr and Tyr-containing proteins. This is Dual specificity protein phosphatase 19 from Mus musculus (Mouse).